Reading from the N-terminus, the 163-residue chain is MVKKNSSKAAPATIARNKRATFEYRFEEKMEAGLSLMGWEVKSIRMGKVNLSDCYVFLKNGEAFMHGCTIIPLNTASTHVVCDPLRLKKLLLSRKELDKLAGLVERQGYSIIPISMYWRKGAWVKVEIGLGKGKKDHDKREDTKAREWEVEKARVMKKEKTHG.

Belongs to the SmpB family.

The protein resides in the cytoplasm. Its function is as follows. Required for rescue of stalled ribosomes mediated by trans-translation. Binds to transfer-messenger RNA (tmRNA), required for stable association of tmRNA with ribosomes. tmRNA and SmpB together mimic tRNA shape, replacing the anticodon stem-loop with SmpB. tmRNA is encoded by the ssrA gene; the 2 termini fold to resemble tRNA(Ala) and it encodes a 'tag peptide', a short internal open reading frame. During trans-translation Ala-aminoacylated tmRNA acts like a tRNA, entering the A-site of stalled ribosomes, displacing the stalled mRNA. The ribosome then switches to translate the ORF on the tmRNA; the nascent peptide is terminated with the 'tag peptide' encoded by the tmRNA and targeted for degradation. The ribosome is freed to recommence translation, which seems to be the essential function of trans-translation. This chain is SsrA-binding protein, found in Shewanella baltica (strain OS223).